We begin with the raw amino-acid sequence, 220 residues long: Riboflavin kinase (220 aa).

The tract at residues 1 to 92 (MDTSDQYYRA…LSRILSIKSN (92 aa)) is H-T-H motif-like. Residues 93 to 220 (IVMTGIVVPG…GDEVTIEVTA (128 aa)) are riboflavin kinase. CDP is bound at residue 102 to 107 (GMGEGK). Mg(2+) contacts are provided by Thr-131 and Asn-133. Residues Thr-188 and Glu-195 each coordinate FMN. 200–203 (KYLR) is a CDP binding site.

Belongs to the archaeal riboflavin kinase family. Mg(2+) serves as cofactor.

The catalysed reaction is riboflavin + CTP = CDP + FMN + H(+). The protein operates within cofactor biosynthesis; FMN biosynthesis; FMN from riboflavin (CTP route): step 1/1. Its function is as follows. Catalyzes the CTP-dependent phosphorylation of riboflavin (vitamin B2) to form flavin mononucleotide (FMN). In Thermoplasma volcanium (strain ATCC 51530 / DSM 4299 / JCM 9571 / NBRC 15438 / GSS1), this protein is Riboflavin kinase (ribK).